Reading from the N-terminus, the 366-residue chain is Mannonate dehydratase (366 aa).

This sequence belongs to the mannonate dehydratase family. It depends on Fe(2+) as a cofactor. The cofactor is Mn(2+).

It carries out the reaction D-mannonate = 2-dehydro-3-deoxy-D-gluconate + H2O. The protein operates within carbohydrate metabolism; pentose and glucuronate interconversion. Functionally, catalyzes the dehydration of D-mannonate. The protein is Mannonate dehydratase of Streptococcus pneumoniae (strain 70585).